The following is a 970-amino-acid chain: Protein translocase subunit SecA (970 aa).

Residues Gln99, 117–121 (GEGKT), and Asp631 contribute to the ATP site.

The protein belongs to the SecA family. Monomer and homodimer. Part of the essential Sec protein translocation apparatus which comprises SecA, SecYEG and auxiliary proteins SecDF. Other proteins may also be involved.

The protein localises to the cell inner membrane. Its subcellular location is the cytoplasm. It carries out the reaction ATP + H2O + cellular proteinSide 1 = ADP + phosphate + cellular proteinSide 2.. Functionally, part of the Sec protein translocase complex. Interacts with the SecYEG preprotein conducting channel. Has a central role in coupling the hydrolysis of ATP to the transfer of proteins into and across the cell membrane, serving as an ATP-driven molecular motor driving the stepwise translocation of polypeptide chains across the membrane. This is Protein translocase subunit SecA from Chlamydia pneumoniae (Chlamydophila pneumoniae).